Reading from the N-terminus, the 188-residue chain is Adenine phosphoribosyltransferase (188 aa).

134–138 is a binding site for AMP; the sequence is ATGGS.

It belongs to the purine/pyrimidine phosphoribosyltransferase family. As to quaternary structure, homodimer. It depends on Mg(2+) as a cofactor.

It is found in the cytoplasm. The protein localises to the nucleus. The enzyme catalyses AMP + diphosphate = 5-phospho-alpha-D-ribose 1-diphosphate + adenine. It participates in purine metabolism; AMP biosynthesis via salvage pathway; AMP from adenine: step 1/1. In terms of biological role, catalyzes a salvage reaction resulting in the formation of AMP, that is energically less costly than de novo synthesis. This chain is Adenine phosphoribosyltransferase (APT1), found in Candida albicans (strain SC5314 / ATCC MYA-2876) (Yeast).